The primary structure comprises 101 residues: Integration host factor subunit alpha (101 aa).

Residues 49 to 70 (FGNFQLRDKPQRPGRNPKTGEE) are disordered.

Belongs to the bacterial histone-like protein family. Heterodimer of an alpha and a beta chain.

This protein is one of the two subunits of integration host factor, a specific DNA-binding protein that functions in genetic recombination as well as in transcriptional and translational control. This chain is Integration host factor subunit alpha, found in Nitrosospira multiformis (strain ATCC 25196 / NCIMB 11849 / C 71).